Reading from the N-terminus, the 535-residue chain is Reticuline oxidase (535 aa).

The signal sequence occupies residues 1–23 (MMCRSLTLRFFLFIVLLQTCVRG). Asparagine 42 carries an N-linked (GlcNAc...) asparagine glycan. Residues 71 to 245 (TVSKPSFIVM…YAWKIKLLPV (175 aa)) enclose the FAD-binding PCMH-type domain. A cross-link (6-(S-cysteinyl)-8alpha-(pros-histidyl)-FAD (His-Cys)) is located at residues 108 to 170 (HSYEGLSYTA…DTLGFTAGWC (63 aa)). Asparagine 475 carries N-linked (GlcNAc...) asparagine glycosylation.

This sequence belongs to the oxygen-dependent FAD-linked oxidoreductase family. Requires FAD as cofactor. A metal cation serves as cofactor. In terms of processing, the FAD cofactor is bound via a bicovalent 6-S-cysteinyl, 8alpha-N1-histidyl FAD linkage. As to expression, expressed in roots and stems. Not detected in leaves or reproductive organs. Restricted to the parietal region of sieve elements adjacent or proximal to laticifers.

Its subcellular location is the cytoplasmic vesicle. It catalyses the reaction (S)-reticuline + O2 = (S)-scoulerine + H2O2 + H(+). Its pathway is alkaloid biosynthesis; (S)-scoulerine biosynthesis; (S)-scoulerine from (S)-reticuline: step 1/1. Its function is as follows. Oxygen-dependent FAD-dependent oxidoreductase essential to the formation of benzophenanthridine alkaloids in the response of plants to pathogenic attack. Catalyzes the stereospecific conversion of the N-methyl moiety of (S)-reticuline into the berberine bridge carbon of (S)-scoulerine. Involved in the biosynthesis of sanguinarine. The protein is Reticuline oxidase (BBE1) of Papaver somniferum (Opium poppy).